We begin with the raw amino-acid sequence, 598 residues long: Dihydroxy-acid dehydratase, mitochondrial (598 aa).

A mitochondrion-targeting transit peptide spans 1–18; sequence MMFCKLLRCQNGIASKRA. Cysteine 84 is a binding site for [2Fe-2S] cluster. Residue aspartate 116 participates in Mg(2+) binding. Position 157 (cysteine 157) interacts with [2Fe-2S] cluster. Aspartate 158 lines the Mg(2+) pocket. [2Fe-2S] cluster is bound at residue cysteine 232. Residue glutamate 485 coordinates Mg(2+). The active-site Proton acceptor is the serine 511.

This sequence belongs to the IlvD/Edd family. It depends on [2Fe-2S] cluster as a cofactor. Requires Mg(2+) as cofactor.

The protein resides in the mitochondrion. It carries out the reaction (2R)-2,3-dihydroxy-3-methylbutanoate = 3-methyl-2-oxobutanoate + H2O. The catalysed reaction is (2R,3R)-2,3-dihydroxy-3-methylpentanoate = (S)-3-methyl-2-oxopentanoate + H2O. It participates in amino-acid biosynthesis; L-isoleucine biosynthesis; L-isoleucine from 2-oxobutanoate: step 3/4. The protein operates within amino-acid biosynthesis; L-valine biosynthesis; L-valine from pyruvate: step 3/4. Its function is as follows. Dihydroxyacid dehydratase that catalyzes the third step in the common pathway leading to biosynthesis of branched-chain amino acids. Catalyzes the dehydration of (2R,3R)-2,3-dihydroxy-3-methylpentanoate (2,3-dihydroxy-3-methylvalerate) into 2-oxo-3-methylpentanoate (2-oxo-3-methylvalerate) and of (2R)-2,3-dihydroxy-3-methylbutanoate (2,3-dihydroxyisovalerate) into 2-oxo-3-methylbutanoate (2-oxoisovalerate), the penultimate precursor to L-isoleucine and L-valine, respectively. The polypeptide is Dihydroxy-acid dehydratase, mitochondrial (Schizosaccharomyces pombe (strain 972 / ATCC 24843) (Fission yeast)).